Consider the following 675-residue polypeptide: Regulator of G-protein signaling 9 (675 aa).

The DEP domain occupies 30-105 (PETGVRMHNQ…PDSSLYRFQT (76 aa)). The G protein gamma domain maps to 222-283 (VRKEIMYYQQ…DTQFWDLNAK (62 aa)). Residues 299–414 (NFSELIRDPK…LKSPIYKEML (116 aa)) form the RGS domain. Disordered regions lie at residues 524–571 (RVAL…PPKA) and 637–662 (DSGTCLMDSDDPRAGESGDQTTEKEV). Positions 542-551 (SGANSGPSVT) are enriched in polar residues. 2 stretches are compositionally biased toward basic and acidic residues: residues 552 to 562 (ENREPSADHSR) and 646 to 662 (DDPRAGESGDQTTEKEV).

As to quaternary structure, heterodimer with GNB5. Interacts with RGS7BP, leading to regulate the subcellular location of the heterodimer formed with GNB5. Component of the RGS9-1-Gbeta5 complex composed of RGS9 (RGS9-1), Gbeta5 (GNB5) and RGS9BP. Interacts with PDE6G and GNAT1. In terms of processing, retinal isoform 1 is light-dependent phosphorylated at 'Ser-475'. Phosphorylation is decreased by light exposition. Interaction with RGS9BP is decreased when isoform 1 is phosphorylated at 'Ser-475'. Isoform 1 is expressed in photoreceptor outer segments. Isoform 2 is expressed in brain striatum.

The protein resides in the membrane. Inhibits signal transduction by increasing the GTPase activity of G protein alpha subunits thereby driving them into their inactive GDP-bound form. Binds to GNAT1. Involved in phototransduction; key element in the recovery phase of visual transduction. The sequence is that of Regulator of G-protein signaling 9 (Rgs9) from Mus musculus (Mouse).